The chain runs to 210 residues: Ribonuclease HII (210 aa).

Positions 18–207 (RFVAGVDEVG…VHKILCKEET (190 aa)) constitute an RNase H type-2 domain. Positions 24, 25, and 115 each coordinate a divalent metal cation.

The protein belongs to the RNase HII family. The cofactor is Mn(2+). It depends on Mg(2+) as a cofactor.

Its subcellular location is the cytoplasm. It carries out the reaction Endonucleolytic cleavage to 5'-phosphomonoester.. Its function is as follows. Endonuclease that specifically degrades the RNA of RNA-DNA hybrids. The chain is Ribonuclease HII from Paracoccus denitrificans (strain Pd 1222).